A 378-amino-acid polypeptide reads, in one-letter code: Ribosomal RNA large subunit methyltransferase G (378 aa).

The protein belongs to the methyltransferase superfamily. RlmG family.

It localises to the cytoplasm. The enzyme catalyses guanosine(1835) in 23S rRNA + S-adenosyl-L-methionine = N(2)-methylguanosine(1835) in 23S rRNA + S-adenosyl-L-homocysteine + H(+). In terms of biological role, specifically methylates the guanine in position 1835 (m2G1835) of 23S rRNA. The sequence is that of Ribosomal RNA large subunit methyltransferase G from Escherichia coli O6:K15:H31 (strain 536 / UPEC).